A 154-amino-acid polypeptide reads, in one-letter code: 3-hydroxyacyl-[acyl-carrier-protein] dehydratase FabZ (154 aa).

His54 is an active-site residue.

It belongs to the thioester dehydratase family. FabZ subfamily.

It localises to the cytoplasm. The catalysed reaction is a (3R)-hydroxyacyl-[ACP] = a (2E)-enoyl-[ACP] + H2O. Functionally, involved in unsaturated fatty acids biosynthesis. Catalyzes the dehydration of short chain beta-hydroxyacyl-ACPs and long chain saturated and unsaturated beta-hydroxyacyl-ACPs. This chain is 3-hydroxyacyl-[acyl-carrier-protein] dehydratase FabZ, found in Shewanella sp. (strain MR-4).